The sequence spans 327 residues: Protein-L-isoaspartate O-methyltransferase (327 aa).

Disordered regions lie at residues 1-38 (MSGE…DAAR) and 62-105 (PRAA…KSAT). Over residues 14–29 (EDLKREPRKPEGRAAE) the composition is skewed to basic and acidic residues. The segment covering 62–77 (PRAAGASGSGVPVAKP) has biased composition (low complexity). Residues 92–105 (APSSGVKNGDKSAT) are compositionally biased toward polar residues. Residue S175 is part of the active site.

This sequence belongs to the methyltransferase superfamily. L-isoaspartyl/D-aspartyl protein methyltransferase family.

It localises to the cytoplasm. It catalyses the reaction [protein]-L-isoaspartate + S-adenosyl-L-methionine = [protein]-L-isoaspartate alpha-methyl ester + S-adenosyl-L-homocysteine. Catalyzes the methyl esterification of L-isoaspartyl residues in peptides and proteins that result from spontaneous decomposition of normal L-aspartyl and L-asparaginyl residues. It plays a role in the repair and/or degradation of damaged proteins. The protein is Protein-L-isoaspartate O-methyltransferase of Burkholderia thailandensis (strain ATCC 700388 / DSM 13276 / CCUG 48851 / CIP 106301 / E264).